We begin with the raw amino-acid sequence, 299 residues long: MRRQLGSDAGLTARMFLTMFLLAALYLFFLAVLWQAGVSYTGIIVFVAIMLGVQYYFSDRMVLWSMGAKEVSPREAPELHALVERLAALADLPKPRVAIVPTPMPNAFATGRNPANAVVAVTTGLMERLTPSELEAVLGHELTHVKNRDMTVLTLASFFATVASFIVQNFFYWGGAFGGGRDRDERNNIMLVYLASLVVWLVSYFLIRALSRYREFAADRGSAILTGSPGQLASALVKISGSMARIPTRDLRQAEAFNAFFIIPALNGNSIMELFSTHPSLERRLAYLRRLEQEMEERR.

Helical transmembrane passes span 15-35 and 37-57; these read MFLT…VLWQ and GVSY…QYYF. H140 lines the Zn(2+) pocket. E141 is an active-site residue. H144 lines the Zn(2+) pocket. The next 2 helical transmembrane spans lie at 158-178 and 187-207; these read FFAT…GAFG and NNIM…YFLI. Residue E215 participates in Zn(2+) binding.

Belongs to the peptidase M48B family. It depends on Zn(2+) as a cofactor.

It is found in the cell membrane. The polypeptide is Protease HtpX homolog (Moorella thermoacetica (strain ATCC 39073 / JCM 9320)).